A 399-amino-acid chain; its full sequence is Serine/threonine-protein kinase PKZ1 (399 aa).

The disordered stretch occupies residues 30 to 50 (PMQCAYQTQSHSNPEGAKRGR). The Protein kinase domain maps to 92–371 (WQLFDQIGAG…ADQMLQHPWM (280 aa)). Residues 98-106 (IGAGAFGVV) and lysine 121 each bind ATP. Aspartate 219 (proton acceptor) is an active-site residue.

The protein belongs to the protein kinase superfamily. CAMK Ser/Thr protein kinase family.

The catalysed reaction is L-seryl-[protein] + ATP = O-phospho-L-seryl-[protein] + ADP + H(+). The enzyme catalyses L-threonyl-[protein] + ATP = O-phospho-L-threonyl-[protein] + ADP + H(+). Functionally, may regulate an early stage of the zoospore pathway. The chain is Serine/threonine-protein kinase PKZ1 from Phytophthora infestans (strain T30-4) (Potato late blight agent).